The chain runs to 37 residues: Potassium channel toxin alpha-KTx 1.11 (37 aa).

Disulfide bonds link C7–C28, C13–C33, and C17–C35.

This sequence belongs to the short scorpion toxin superfamily. Potassium channel inhibitor family. Alpha-KTx 01 subfamily. As to expression, expressed by the venom gland.

Its subcellular location is the secreted. Reversibly blocks the high conductance calcium-activated potassium channels composed of only alpha subunits (KCa1.1/KCNMA1). Unreversibly blocks the high conductance calcium-activated potassium channels composed of alpha and beta1 subunits (KCNMA1 and KCNMB1). Unreversibly and weakly blocks the high conductance calcium-activated potassium channels composed of alpha and beta4 (KCNMA1 and KCNMB4). The chain is Potassium channel toxin alpha-KTx 1.11 from Centruroides noxius (Mexican scorpion).